A 252-amino-acid chain; its full sequence is Maintenance of carboxysome distribution protein A (252 aa).

Residues glycine 11, glycine 12, glycine 14, lysine 15, threonine 16, threonine 17, glutamine 41, glutamate 147, lysine 151, phenylalanine 182, arginine 183, leucine 216, glutamate 217, and serine 218 each coordinate ATP. Threonine 16 serves as a coordination point for Mg(2+).

Belongs to the ParA family. McdA subfamily. Self-associates (probably a homodimer), interacts with McdB probably via the C-terminus of both proteins. Shows no signs of filament formation. Homodimerizes in the presence of ATP, making extra nucleotide contacts than with ADP or AMP-PNP. Each subunit binds 1 ATP molecule; Glu-147, Lys-151 and Arg-183 cross the dimer interface to contact ATP in the other subunit, while Phe-182, Arg-183 and Phe-221 stack with the adenine base in their own subunit.

It is found in the cytoplasm. Its subcellular location is the nucleoid. It catalyses the reaction ATP + H2O = ADP + phosphate + H(+). McdA and McdB together mediate carboxysome (Cb) spacing, size, ultrastructure and probably inheritance in the cell. Together they prevent Cb aggregation. McdA is an ATPase that forms dynamic gradients on the nucleoid in response to adapter protein McdB, which associates with carboxysomes. The interplay between McdA gradients on the nucleoid and McdB-bound carboxysomes result in the equal spacing of Cbs along the cell length. Binds nucleoid DNA in an ATP-dependent manner; neither ADP nor ATP-gamma-S support DNA binding. Upon ATP-binding dimerizes and binds nucleoid DNA; the (McdA-ATP)2 dimer transiently binds McdB-bound Cbs. McdA's ATPase activity is stimulated 2-fold by DNA and McdB; ATP hydrolysis causes McdA release from DNA. Overexpression leads to loss of McdA oscillation, diffuse nucleoid staining by McdA with formation of large carboxysome aggregates that are in regions depleted of McdA; McdA remains nucleoid-associated. Its function is as follows. Mutagenesis studies (characterized in vivo) suggest ATP binding, protein dimerization and a conformational change are necessary for nucleoid DNA-binding and binding to McdB-bound Cbs, which tethers Cbs to the nucleoid. Eventual McdB-stimulated ATP hydrolysis causes de-dimerization of McdA which no longer binds the nucleoid and releases McdB and Cbs. McdB-bound Cbs then move to a region of higher McdA concentration, distributing Cbs across the nucleoid. Functionally, incorrect positioning (aggregation) of carboxysomes results in reduced CO(2) fixation by encapsulated ribulose-1,5-bisphosphate carboxylase (RuBisCO, cbbL/cbbS), which leads to slower growth, cell elongation, asymmetric cell division and an increase in RuBisCO levels. The chain is Maintenance of carboxysome distribution protein A from Synechococcus elongatus (strain ATCC 33912 / PCC 7942 / FACHB-805) (Anacystis nidulans R2).